Consider the following 360-residue polypeptide: uncharacterized protein (360 aa).

The protein to P.multocida PM1082.

This is an uncharacterized protein from Pasteurella multocida (strain Pm70).